Reading from the N-terminus, the 346-residue chain is Galanin receptor type 1 (346 aa).

The Extracellular portion of the chain corresponds to 1–33 (MELAPVNLSEGNGSDPEPPAEPRPLFGIGVENF). Asparagine 7 and asparagine 12 each carry an N-linked (GlcNAc...) asparagine glycan. Residues 34 to 54 (ITLVVFGLIFAMGVLGNSLVI) traverse the membrane as a helical segment. Topologically, residues 55-69 (TVLARSKPGKPRSTT) are cytoplasmic. Residues 70-90 (NLFILNLSIADLAYLLFCIPF) traverse the membrane as a helical segment. Residues 91–108 (QATVYALPTWVLGAFICK) lie on the Extracellular side of the membrane. A disulfide bridge links cysteine 107 with cysteine 185. Residues 109 to 130 (FIHYFFTVSMLVSIFTLAAMSV) traverse the membrane as a helical segment. Over 131 to 150 (DRYVAIVHSRRSSSLRVSRN) the chain is Cytoplasmic. The helical transmembrane segment at 151 to 171 (ALLGVGFIWALSIAMASPVAY) threads the bilayer. The Extracellular segment spans residues 172 to 196 (YQRLFHRDSNQTFCWEHWPNQLHKK). N-linked (GlcNAc...) asparagine glycosylation occurs at asparagine 181. A helical membrane pass occupies residues 197-217 (AYVVCTFVFGYLLPLLLICFC). The Cytoplasmic segment spans residues 218 to 246 (YAKVLNHLHKKLKNMSKKSEASKKKTAQT). The chain crosses the membrane as a helical span at residues 247–267 (VLVVVVVFGISWLPHHVIHLW). Residues 268-269 (AE) lie on the Extracellular side of the membrane. Residues 270–290 (FGAFPLTPASFFFRITAHCLA) traverse the membrane as a helical segment. The Cytoplasmic portion of the chain corresponds to 291-346 (YSNSSVNPIIYAFLSENFRKAYKQVFKCRVCNESPHGDAKEKNRIDTPPSTNCTHV). Cysteine 318 carries the S-palmitoyl cysteine lipid modification. A compositionally biased stretch (basic and acidic residues) spans 326 to 335 (HGDAKEKNRI). The tract at residues 326 to 346 (HGDAKEKNRIDTPPSTNCTHV) is disordered.

This sequence belongs to the G-protein coupled receptor 1 family. Interacts with GRP39 AND HTR1A. In terms of processing, three cysteine residues are found in the C-terminus, at least one of which may be palmitoylated. In terms of tissue distribution, spinal cord, small intestine, Rin14B insulinoma cells and several brain regions, particularly ventral hippocampus, amygdala, supraoptic nucleus, hypothalamus, thalamus, lateral parabrachial nucleus and locus coeruleus.

The protein localises to the cell membrane. Receptor for the hormone galanin. The activity of this receptor is mediated by G proteins that inhibit adenylate cyclase activity. In Rattus norvegicus (Rat), this protein is Galanin receptor type 1 (Galr1).